A 329-amino-acid polypeptide reads, in one-letter code: Tetraacyldisaccharide 4'-kinase (329 aa).

An ATP-binding site is contributed by 57 to 64 (TAGGSGKT).

It belongs to the LpxK family.

The catalysed reaction is a lipid A disaccharide + ATP = a lipid IVA + ADP + H(+). It participates in glycolipid biosynthesis; lipid IV(A) biosynthesis; lipid IV(A) from (3R)-3-hydroxytetradecanoyl-[acyl-carrier-protein] and UDP-N-acetyl-alpha-D-glucosamine: step 6/6. Its function is as follows. Transfers the gamma-phosphate of ATP to the 4'-position of a tetraacyldisaccharide 1-phosphate intermediate (termed DS-1-P) to form tetraacyldisaccharide 1,4'-bis-phosphate (lipid IVA). In Thiobacillus denitrificans (strain ATCC 25259 / T1), this protein is Tetraacyldisaccharide 4'-kinase.